The sequence spans 124 residues: Tax1-binding protein 3 (124 aa).

Position 2 is an N-acetylserine (S2). The 98-residue stretch at 15–112 (RVEIHKLRQG…EVVRLLVTRQ (98 aa)) folds into the PDZ domain. The residue at position 61 (S61) is a Phosphoserine.

Interacts (via its PDZ domain) with GLS2. Interacts (via its PDZ domain) with RTKN (via the C-terminal region); this interaction facilitates Rho-mediated activation of the FOS serum response element (SRE). Interacts (via its PDZ domain) with CTNNB1; this interaction inhibits the transcriptional activity of CTNNB1. Interacts with HTLV-1 TAX protein. Interacts (via PDZ domain) with ARHGEF16. Interacts (via PDZ domain) with KCNJ4 (via C-terminus). Competes with LIN7A for KCNJ4 binding. Interacts with ADGRB2. As to expression, ubiquitous. Detected in brain, heart, kidney, lung, small intestine and skeletal muscle. Detected in various cell lines including HeLa. Weakly expressed in peripheral blood leukocytes.

Its subcellular location is the cytoplasm. It localises to the nucleus. The protein resides in the cell membrane. May regulate a number of protein-protein interactions by competing for PDZ domain binding sites. Binds CTNNB1 and may thereby act as an inhibitor of the Wnt signaling pathway. Competes with LIN7A for KCNJ4 binding, and thereby promotes KCNJ4 internalization. May play a role in the Rho signaling pathway. May play a role in activation of CDC42 by the viral protein HPV16 E6. This is Tax1-binding protein 3 from Homo sapiens (Human).